The sequence spans 243 residues: Probable transcriptional regulatory protein BRE_29 (243 aa).

The protein belongs to the TACO1 family.

The protein localises to the cytoplasm. The chain is Probable transcriptional regulatory protein BRE_29 from Borrelia recurrentis (strain A1).